Reading from the N-terminus, the 979-residue chain is Collagen alpha-2(I) chain (979 aa).

Residues 1–979 form a disordered region; that stretch reads SGGFDFSFLP…FGYEGDFYRA (979 aa). 4 positions are modified to 4-hydroxyproline: Pro10, Pro13, Pro35, and Pro41. Over residues 28–41 the composition is skewed to low complexity; it reads LMGPRGPPGASGAP. At Lys88 the chain carries 5-hydroxylysine; alternate. Lys88 carries O-linked (Gal...) hydroxylysine; alternate glycosylation. Positions 128–157 are enriched in low complexity; the sequence is VGAPGPAGARGSDGSVGPVGPAGPIGSAGP. The segment covering 256 to 265 has biased composition (gly residues); the sequence is GESGGKGEPG. Residues 266 to 276 show a composition bias toward low complexity; the sequence is SAGPQGPPGSS. Residues 298 to 307 show a composition bias toward gly residues; that stretch reads GLRGGPGSRG. Pro341 and Pro344 each carry 4-hydroxyproline. Residues 434 to 443 show a composition bias toward gly residues; sequence GVQGGKGEQG. Composition is skewed to low complexity over residues 490-507 and 519-529; these read PGES…SRGP and EPGVVGAPGTA. The span at 530–548 shows a compositional bias: gly residues; that stretch reads GPAGSGGPGERGAAGIPGG. 2 stretches are compositionally biased toward low complexity: residues 570–599 and 606–626; these read RGAP…PRGS and VGPA…QPGA. The span at 627–636 shows a compositional bias: basic and acidic residues; it reads KGERGTKGPK. Low complexity predominate over residues 644-654; that stretch reads PTGPVGSAGPA. Gly residues predominate over residues 664–673; the sequence is GSRGDGGPPG. The segment covering 675–684 has biased composition (low complexity); the sequence is TGFPGAAGRT. Residues 721-730 are compositionally biased toward gly residues; the sequence is GETGAGGPPG. Composition is skewed to low complexity over residues 738–765 and 773–783; these read SGEP…LGLP and LPGVAGAVGEP. The segment covering 784-802 has biased composition (gly residues); it reads GPLGIGPPGARGPSGGDGL. Composition is skewed to low complexity over residues 811–833 and 841–856; these read YAGN…VGPA and EPGP…ALGP. Positions 866–877 are enriched in basic and acidic residues; sequence RGDKGEPGDKGP. Residues 951–961 are compositionally biased toward pro residues; the sequence is GPGPPGPPGPP.

The protein belongs to the fibrillar collagen family. In terms of assembly, trimers of one alpha 2(I) and two alpha 1(I) chains. Interacts (via C-terminus) with TMEM131 (via PapD-L domain); the interaction is direct and is involved in assembly and TRAPPIII ER-to-Golgi transport complex-dependent secretion of collagen. Prolines at the third position of the tripeptide repeating unit (G-X-Y) are hydroxylated in some or all of the chains. Expressed in bones.

It is found in the secreted. The protein resides in the extracellular space. The protein localises to the extracellular matrix. Type I collagen is a member of group I collagen (fibrillar forming collagen). This Neocnus dousman (Slow ground sloth) protein is Collagen alpha-2(I) chain.